A 200-amino-acid chain; its full sequence is ATP synthase subunit s, mitochondrial (200 aa).

The transit peptide at 1–25 (MMPFGKISQQLCGVKKLPWSCDSRY) directs the protein to the mitochondrion. The interval 1-61 (MMPFGKISQQ…SEWLLRCGAM (61 aa)) is N-terminal domain. Gly59 serves as a coordination point for Mg(2+). LRR repeat units lie at residues 62-87 (VRYHGQERWQKDYNHLPTGPLDKYKI), 88-116 (QAIDATDSCIMSIGFDHMEGLEHVEKIRL), 117-141 (CKCHYIEDDCLLRLSQLENLQKTIL), and 142-173 (EMEIISCGNITDKGIIALRHLRNLKYLLLSDL). A Mg(2+)-binding site is contributed by Thr93.

It belongs to the ATP synthase subunit s family. In terms of assembly, homotetramer. Associates with ATP synthase.

The protein localises to the mitochondrion. It is found in the mitochondrion inner membrane. Functionally, involved in regulation of mitochondrial membrane ATP synthase. Necessary for H(+) conduction of ATP synthase. Facilitates energy-driven catalysis of ATP synthesis by blocking a proton leak through an alternative proton exit pathway. The chain is ATP synthase subunit s, mitochondrial from Homo sapiens (Human).